Here is a 164-residue protein sequence, read N- to C-terminus: Ribosome maturation factor RimM (164 aa).

The PRC barrel domain maps to 90-161 (EGRYYVADII…EIIIKPVKTW (72 aa)).

It belongs to the RimM family. In terms of assembly, binds ribosomal protein uS19.

The protein resides in the cytoplasm. Its function is as follows. An accessory protein needed during the final step in the assembly of 30S ribosomal subunit, possibly for assembly of the head region. Essential for efficient processing of 16S rRNA. May be needed both before and after RbfA during the maturation of 16S rRNA. It has affinity for free ribosomal 30S subunits but not for 70S ribosomes. This Clostridium tetani (strain Massachusetts / E88) protein is Ribosome maturation factor RimM.